Here is a 525-residue protein sequence, read N- to C-terminus: Erythropoietin receptor (525 aa).

A signal peptide spans 1-32 (MGAPSSLLFSTAHWRTVPFLLAFWVLLSTGTA). The Extracellular segment spans residues 33 to 249 (EDPTMTPEFL…TIATIIDLRL (217 aa)). Cysteines 58 and 68 form a disulfide. 4 N-linked (GlcNAc...) asparagine glycosylation sites follow: N77, N100, N149, and N185. Cysteines 91 and 107 form a disulfide. The Fibronectin type-III domain maps to 146–246 (PPLNVTVKEK…APITIATIID (101 aa)). Positions 232 to 236 (WSDWT) match the WSXWS motif motif. The helical transmembrane segment at 250–270 (LLLLSIAIFVALIAGVGVYIF) threads the bilayer. Topologically, residues 271–525 (MRHGMYLKHK…NFLAPIYSQS (255 aa)) are cytoplasmic. The Box 1 motif motif lies at 281 to 289 (VWPQVPTPE). 2 disordered regions span residues 434-459 (APRM…QSIP) and 492-513 (LDMS…QNSP). Positions 447-459 (ENSVSSDGKQSIP) are enriched in polar residues. The ITIM motif motif lies at 487-492 (LKYAYL).

Belongs to the type I cytokine receptor family. Type 1 subfamily. In terms of tissue distribution, expressed in the ventral blood island from stage 28 through to stage 36. Expressed in the circulating blood by stage 40. In the adult, highly expressed in peripheral blood cells including immature erythrocytes and basophils, and moderately expressed in the hematopoietic organs: liver, kidney and spleen. Expressed at a low level in adult brain.

It localises to the cell membrane. Its function is as follows. Receptor for erythropoietin. Mediates erythropoietin-induced erythroblast proliferation and differentiation. The protein is Erythropoietin receptor of Xenopus laevis (African clawed frog).